A 375-amino-acid polypeptide reads, in one-letter code: Succinyl-diaminopimelate desuccinylase (375 aa).

Histidine 66 lines the Zn(2+) pocket. Residue aspartate 68 is part of the active site. Aspartate 99 serves as a coordination point for Zn(2+). Glutamate 133 acts as the Proton acceptor in catalysis. Zn(2+) contacts are provided by glutamate 134, glutamate 162, and histidine 348.

Belongs to the peptidase M20A family. DapE subfamily. Homodimer. Zn(2+) serves as cofactor. The cofactor is Co(2+).

The catalysed reaction is N-succinyl-(2S,6S)-2,6-diaminopimelate + H2O = (2S,6S)-2,6-diaminopimelate + succinate. It functions in the pathway amino-acid biosynthesis; L-lysine biosynthesis via DAP pathway; LL-2,6-diaminopimelate from (S)-tetrahydrodipicolinate (succinylase route): step 3/3. Its function is as follows. Catalyzes the hydrolysis of N-succinyl-L,L-diaminopimelic acid (SDAP), forming succinate and LL-2,6-diaminopimelate (DAP), an intermediate involved in the bacterial biosynthesis of lysine and meso-diaminopimelic acid, an essential component of bacterial cell walls. In Klebsiella pneumoniae (strain 342), this protein is Succinyl-diaminopimelate desuccinylase.